We begin with the raw amino-acid sequence, 94 residues long: Cell division topological specificity factor (94 aa).

This sequence belongs to the MinE family.

Prevents the cell division inhibition by proteins MinC and MinD at internal division sites while permitting inhibition at polar sites. This ensures cell division at the proper site by restricting the formation of a division septum at the midpoint of the long axis of the cell. The protein is Cell division topological specificity factor of Synechococcus sp. (strain CC9311).